Here is a 709-residue protein sequence, read N- to C-terminus: Translation initiation factor IF-2 (709 aa).

Basic and acidic residues-rich tracts occupy residues 47–70 (DHQY…EKPK) and 105–121 (KGKE…EKKL). The segment at 47 to 157 (DHQYRPNTGK…QPAKKEKELP (111 aa)) is disordered. Over residues 125-137 (AKKKGKGPAKGKK) the composition is skewed to basic residues. Over residues 138–149 (QAAPAAKQAPQP) the composition is skewed to low complexity. A tr-type G domain is found at 240–409 (ERPPVVTIMG…LLVSEMEELK (170 aa)). Residues 249 to 256 (GHVDHGKT) are G1. 249-256 (GHVDHGKT) contacts GTP. The G2 stretch occupies residues 274–278 (GITQH). The tract at residues 295 to 298 (DTPG) is G3. GTP is bound by residues 295–299 (DTPGH) and 349–352 (NKID). Positions 349–352 (NKID) are G4. A G5 region spans residues 385-387 (SAK).

This sequence belongs to the TRAFAC class translation factor GTPase superfamily. Classic translation factor GTPase family. IF-2 subfamily.

Its subcellular location is the cytoplasm. One of the essential components for the initiation of protein synthesis. Protects formylmethionyl-tRNA from spontaneous hydrolysis and promotes its binding to the 30S ribosomal subunits. Also involved in the hydrolysis of GTP during the formation of the 70S ribosomal complex. The protein is Translation initiation factor IF-2 of Geobacillus kaustophilus (strain HTA426).